The chain runs to 259 residues: Proteasome subunit alpha (259 aa).

It belongs to the peptidase T1A family. As to quaternary structure, the 20S proteasome core is composed of 14 alpha and 14 beta subunits that assemble into four stacked heptameric rings, resulting in a barrel-shaped structure. The two inner rings, each composed of seven catalytic beta subunits, are sandwiched by two outer rings, each composed of seven alpha subunits. The catalytic chamber with the active sites is on the inside of the barrel. Has a gated structure, the ends of the cylinder being occluded by the N-termini of the alpha-subunits. Is capped at one or both ends by the proteasome regulatory ATPase, PAN.

The protein resides in the cytoplasm. With respect to regulation, the formation of the proteasomal ATPase PAN-20S proteasome complex, via the docking of the C-termini of PAN into the intersubunit pockets in the alpha-rings, triggers opening of the gate for substrate entry. Interconversion between the open-gate and close-gate conformations leads to a dynamic regulation of the 20S proteasome proteolysis activity. Component of the proteasome core, a large protease complex with broad specificity involved in protein degradation. This is Proteasome subunit alpha from Methanococcus maripaludis (strain C6 / ATCC BAA-1332).